We begin with the raw amino-acid sequence, 367 residues long: UDP-N-acetylglucosamine--N-acetylmuramyl-(pentapeptide) pyrophosphoryl-undecaprenol N-acetylglucosamine transferase (367 aa).

UDP-N-acetyl-alpha-D-glucosamine contacts are provided by residues T15–G17, N127, R163, S191, I249, and Q294.

This sequence belongs to the glycosyltransferase 28 family. MurG subfamily.

It localises to the cell inner membrane. It carries out the reaction di-trans,octa-cis-undecaprenyl diphospho-N-acetyl-alpha-D-muramoyl-L-alanyl-D-glutamyl-meso-2,6-diaminopimeloyl-D-alanyl-D-alanine + UDP-N-acetyl-alpha-D-glucosamine = di-trans,octa-cis-undecaprenyl diphospho-[N-acetyl-alpha-D-glucosaminyl-(1-&gt;4)]-N-acetyl-alpha-D-muramoyl-L-alanyl-D-glutamyl-meso-2,6-diaminopimeloyl-D-alanyl-D-alanine + UDP + H(+). It functions in the pathway cell wall biogenesis; peptidoglycan biosynthesis. Functionally, cell wall formation. Catalyzes the transfer of a GlcNAc subunit on undecaprenyl-pyrophosphoryl-MurNAc-pentapeptide (lipid intermediate I) to form undecaprenyl-pyrophosphoryl-MurNAc-(pentapeptide)GlcNAc (lipid intermediate II). This chain is UDP-N-acetylglucosamine--N-acetylmuramyl-(pentapeptide) pyrophosphoryl-undecaprenol N-acetylglucosamine transferase, found in Burkholderia vietnamiensis (strain G4 / LMG 22486) (Burkholderia cepacia (strain R1808)).